The sequence spans 150 residues: MESANASTSAQSIDQLCKECNIPMHNLQILCVFCRKTLSTAEVYSFAYKQLYVVYRGNFPFAACAICLELQGKVNQFRHFNYAGYAVTVEEETNKSILDVLIRCYLCHKPLCHVEKVRHILDKARFIKLQDTWKGRCFHCWTSCMETILP.

Zinc fingers lie at residues 31–67 (CVFCRKTLSTAEVYSFAYKQLYVVYRGNFPFAACAIC) and 104–140 (CYLCHKPLCHVEKVRHILDKARFIKLQDTWKGRCFHC).

Belongs to the papillomaviridae E6 protein family. In terms of assembly, forms homodimers. Interacts with ubiquitin-protein ligase UBE3A/E6-AP; this interaction stimulates UBE3A ubiquitin activity. Interacts with host TP53 and EP300; this interaction inhibits TP53 activity.

It is found in the host cytoplasm. The protein resides in the host nucleus. In terms of biological role, this protein may be involved in the oncogenic potential of this virus (cervical neoplasia-associated virus). Functionally, plays a major role in the induction and maintenance of cellular transformation. E6 associates with host UBE3A/E6-AP ubiquitin-protein ligase and modulates its activity. Sequesters tumor suppressor TP53 in the host cytoplasm and modulates its activity by interacting with host EP300 that results in the reduction of TP53 acetylation and activation. In turn, apoptosis induced by DNA damage is inhibited. E6 also protects host keratinocytes from apoptosis by mediating the degradation of host BAK1. May also inhibit host immune response. In Human papillomavirus 44, this protein is Protein E6.